The primary structure comprises 119 residues: Large ribosomal subunit protein uL18 (119 aa).

It belongs to the universal ribosomal protein uL18 family. As to quaternary structure, part of the 50S ribosomal subunit; part of the 5S rRNA/L5/L18/L25 subcomplex. Contacts the 5S and 23S rRNAs.

Functionally, this is one of the proteins that bind and probably mediate the attachment of the 5S RNA into the large ribosomal subunit, where it forms part of the central protuberance. This is Large ribosomal subunit protein uL18 from Endomicrobium trichonymphae.